The following is a 189-amino-acid chain: Interferon alpha-6 (189 aa).

An N-terminal signal peptide occupies residues M1–C20. 2 cysteine pairs are disulfide-bonded: C24/C122 and C52/C162.

The protein belongs to the alpha/beta interferon family.

The protein localises to the secreted. Functionally, produced by macrophages, IFN-alpha have antiviral activities. Interferon stimulates the production of two enzymes: a protein kinase and an oligoadenylate synthetase. The sequence is that of Interferon alpha-6 (IFNA6) from Homo sapiens (Human).